The following is a 219-amino-acid chain: Cysteine dioxygenase (219 aa).

Residues His-106, His-108, and His-166 each contribute to the Fe cation site. Positions Cys-113 to Tyr-183 form a cross-link, 3'-(S-cysteinyl)-tyrosine (Cys-Tyr).

It belongs to the cysteine dioxygenase family. It depends on Fe cation as a cofactor. Post-translationally, the thioether cross-link between Cys-113 and Tyr-183 plays a structural role through stabilizing the Fe(2+) ion, and prevents the production of highly damaging free hydroxyl radicals by holding the oxygen radical via hydroxyl hydrogen.

It carries out the reaction L-cysteine + O2 = 3-sulfino-L-alanine + H(+). Its function is as follows. Cysteine dioxygenase involved in sulfite formation from cysteine. Required for keratin degradation and plays an important role in filamentous growth and virulence. This Arthroderma benhamiae (Trichophyton mentagrophytes) protein is Cysteine dioxygenase.